The chain runs to 337 residues: Ribosomal RNA small subunit methyltransferase C (337 aa).

Belongs to the methyltransferase superfamily. RsmC family. As to quaternary structure, monomer.

Its subcellular location is the cytoplasm. The enzyme catalyses guanosine(1207) in 16S rRNA + S-adenosyl-L-methionine = N(2)-methylguanosine(1207) in 16S rRNA + S-adenosyl-L-homocysteine + H(+). Functionally, specifically methylates the guanine in position 1207 of 16S rRNA in the 30S particle. In Acinetobacter baumannii (strain ATCC 17978 / DSM 105126 / CIP 53.77 / LMG 1025 / NCDC KC755 / 5377), this protein is Ribosomal RNA small subunit methyltransferase C.